A 147-amino-acid chain; its full sequence is Transmembrane protein 210 (147 aa).

A signal peptide spans 1–31 (MAPCPQPESCPAGSPLGLICLSLLLIPASAG). Over 32–47 (TYCECSLGLSREALIA) the chain is Extracellular. The helical transmembrane segment at 48-68 (LIVVLAGVSASCFCALVVVAI) threads the bilayer. Residues 69 to 147 (GVFRAKGDTC…PPPPPPPLPQ (79 aa)) lie on the Cytoplasmic side of the membrane. Residues 128-147 (TMTAPLEPPPPPPPPPPLPQ) form a disordered region. Residues 133 to 147 (LEPPPPPPPPPPLPQ) show a composition bias toward pro residues.

It localises to the membrane. Its subcellular location is the cytoplasmic vesicle. The protein localises to the secretory vesicle. It is found in the acrosome. The chain is Transmembrane protein 210 (Tmem210) from Mus musculus (Mouse).